The chain runs to 363 residues: MPSWWCCCCLVVLLYAQRMIVPSSAQNDGSDELQECPGGFCSPKYLCPNGTYNEANAQNQEIIMLRFGEEDVCQDYMQVCCSNATSMRYELVTNNEPVEYGCGISNPGGLIYQVEGNRTYAQYGEFPWVVAILEAFYSSNEQQFTYVGGGTLIHPRFVVTAAHIFNKTENLVASFGEWDMNRDENVYPKQNIDIDRTIIVHPEYNSVGLLNDIALAQLKQNVVYDKHIRPICLPNPTDRFDDQLCISTGWGIEALTSAYANVLKRVDLPVIARASCKKLFAETRLGPFFRLHKSVLCAGGEEGADMCDGDGGSGLACPNESGAYVLAGIVSWGLSCHQQNVPGAYVNVARFVTWINATIEGIL.

The signal sequence occupies residues 1-25 (MPSWWCCCCLVVLLYAQRMIVPSSA). Positions 33-82 (LQECPGGFCSPKYLCPNGTYNEANAQNQEIIMLRFGEEDVCQDYMQVCCS) constitute a Clip domain. Disulfide bonds link Cys-36–Cys-80, Cys-41–Cys-73, and Cys-47–Cys-81. Asn-49, Asn-83, Asn-117, and Asn-166 each carry an N-linked (GlcNAc...) asparagine glycan. The 247-residue stretch at 114 to 360 (VEGNRTYAQY…FVTWINATIE (247 aa)) folds into the Peptidase S1 domain. 3 cysteine pairs are disulfide-bonded: Cys-245–Cys-317, Cys-276–Cys-297, and Cys-307–Cys-336. N-linked (GlcNAc...) asparagine glycans are attached at residues Asn-319 and Asn-356.

It belongs to the peptidase S1 family. CLIP subfamily. In terms of assembly, heterodimer of a light chain and a heavy chain; disulfide-linked. Secreted as a full-length protein. Proteolytically cleaved into two chains which remain covalently linked. Cleavage is induced by Gram-positive or Gram-negative bacteria infection.

It localises to the secreted. In terms of biological role, inactive serine protease which plays an essential role in the innate immune response against bacteria, fungi and protozoa infection by activating the melanization cascade. In the melanization cascade, acts downstream of TEP1 and SPCLIP1 to promote CLIPA28 and CLIPC9 proteolytic cleavage and CLIPC9 recruitment to microbial surfaces. In the resistant strain L3-5, required for the melanization of killed parasite P.berghei ookinetes which results in their clearance. In the susceptible strain G3, appears to be dispensable for ookinete elimination which occurs by lysis. Required for the melanization of Gram-positive and Gram-negative bacteria. During the late stage of fungus B.bassiana-mediated infection, required for the initiation of hyphae melanization by promoting prophenoloxidase PPO activation. In Anopheles gambiae (African malaria mosquito), this protein is Inactive CLIP domain-containing serine protease A8.